The primary structure comprises 131 residues: Jacalin-related lectin 15 (131 aa).

In terms of domain architecture, Jacalin-type lectin spans 1–126 (MSTPSGSNPL…LTSLGAYFAP (126 aa)).

The protein belongs to the jacalin lectin family. Expressed in the vascular and surrounding tissues in cotyledons. Detected in root apical meristems.

In Arabidopsis thaliana (Mouse-ear cress), this protein is Jacalin-related lectin 15 (JAL15).